Consider the following 198-residue polypeptide: FMN-dependent NADH:quinone oxidoreductase (198 aa).

FMN is bound by residues 92–95 (MWNL) and 136–139 (SRGG).

The protein belongs to the azoreductase type 1 family. In terms of assembly, homodimer. It depends on FMN as a cofactor.

The enzyme catalyses 2 a quinone + NADH + H(+) = 2 a 1,4-benzosemiquinone + NAD(+). The catalysed reaction is N,N-dimethyl-1,4-phenylenediamine + anthranilate + 2 NAD(+) = 2-(4-dimethylaminophenyl)diazenylbenzoate + 2 NADH + 2 H(+). In terms of biological role, quinone reductase that provides resistance to thiol-specific stress caused by electrophilic quinones. Also exhibits azoreductase activity. Catalyzes the reductive cleavage of the azo bond in aromatic azo compounds to the corresponding amines. In Clostridium perfringens (strain ATCC 13124 / DSM 756 / JCM 1290 / NCIMB 6125 / NCTC 8237 / Type A), this protein is FMN-dependent NADH:quinone oxidoreductase.